We begin with the raw amino-acid sequence, 1179 residues long: Dynein axonemal assembly factor 9 (1179 aa).

As to quaternary structure, interacts with ARL3.

May act as an effector for ARL3. The polypeptide is Dynein axonemal assembly factor 9 (Mus musculus (Mouse)).